A 360-amino-acid polypeptide reads, in one-letter code: Phospho-N-acetylmuramoyl-pentapeptide-transferase (360 aa).

Residues 1-25 (MLVWLAEHLVKYYSGFNVFSYLTFR) are Periplasmic-facing. The chain crosses the membrane as a helical span at residues 26–46 (AIVSLLTALFISLWMGPRMIA). Residues 47 to 71 (HLQKLSFGQVVRNDGPESHFSKRGT) are Cytoplasmic-facing. A helical transmembrane segment spans residues 72–92 (PTMGGIMILTAIVISVLLWAY). Proline 93 is a topological domain (periplasmic). The chain crosses the membrane as a helical span at residues 94 to 114 (SNPYVWCVLVVLVGYGVIGFV). The Cytoplasmic segment spans residues 115-131 (DDYRKVVRKDTKGLIAR). The helical transmembrane segment at 132 to 152 (WKYFWMSVIALGVAFALYLAG) threads the bilayer. Over 153–167 (KDTPATQLVVPFFKD) the chain is Periplasmic. Residues 168–188 (VMPQLGLFYILLAYFVIVGTG) traverse the membrane as a helical segment. Residues 189 to 198 (NAVNLTDGLD) are Cytoplasmic-facing. A helical transmembrane segment spans residues 199 to 219 (GLAIMPTVFVAGGFALVAWAT). At 220–235 (GNMNFASYLHIPYLRH) the chain is on the periplasmic side. The helical transmembrane segment at 236-256 (AGELVIVCTAIVGAGLGFLWF) threads the bilayer. The Cytoplasmic segment spans residues 257–262 (NTYPAQ). Residues 263–283 (VFMGDVGSLALGGALGIIAVL) form a helical membrane-spanning segment. Residues 284-287 (LRQE) are Periplasmic-facing. Residues 288–308 (FLLVIMGGVFVVETLSVILQV) traverse the membrane as a helical segment. Topologically, residues 309–337 (GSFKLRGQRIFRMAPIHHHYELKGWPEPR) are cytoplasmic. The chain crosses the membrane as a helical span at residues 338-358 (VIVRFWIISLMLVLIGLATLK). At 359 to 360 (VR) the chain is on the periplasmic side.

This sequence belongs to the glycosyltransferase 4 family. MraY subfamily. Mg(2+) serves as cofactor.

It is found in the cell inner membrane. It catalyses the reaction UDP-N-acetyl-alpha-D-muramoyl-L-alanyl-gamma-D-glutamyl-meso-2,6-diaminopimeloyl-D-alanyl-D-alanine + di-trans,octa-cis-undecaprenyl phosphate = di-trans,octa-cis-undecaprenyl diphospho-N-acetyl-alpha-D-muramoyl-L-alanyl-D-glutamyl-meso-2,6-diaminopimeloyl-D-alanyl-D-alanine + UMP. Its pathway is cell wall biogenesis; peptidoglycan biosynthesis. Catalyzes the initial step of the lipid cycle reactions in the biosynthesis of the cell wall peptidoglycan: transfers peptidoglycan precursor phospho-MurNAc-pentapeptide from UDP-MurNAc-pentapeptide onto the lipid carrier undecaprenyl phosphate, yielding undecaprenyl-pyrophosphoryl-MurNAc-pentapeptide, known as lipid I. This chain is Phospho-N-acetylmuramoyl-pentapeptide-transferase, found in Shigella boydii serotype 18 (strain CDC 3083-94 / BS512).